We begin with the raw amino-acid sequence, 287 residues long: ATP synthase gamma chain (287 aa).

This sequence belongs to the ATPase gamma chain family. As to quaternary structure, F-type ATPases have 2 components, CF(1) - the catalytic core - and CF(0) - the membrane proton channel. CF(1) has five subunits: alpha(3), beta(3), gamma(1), delta(1), epsilon(1). CF(0) has three main subunits: a, b and c.

Its subcellular location is the cell inner membrane. In terms of biological role, produces ATP from ADP in the presence of a proton gradient across the membrane. The gamma chain is believed to be important in regulating ATPase activity and the flow of protons through the CF(0) complex. The sequence is that of ATP synthase gamma chain from Ectopseudomonas mendocina (strain ymp) (Pseudomonas mendocina).